The primary structure comprises 86 residues: Cell division topological specificity factor (86 aa).

It belongs to the MinE family.

Its function is as follows. Prevents the cell division inhibition by proteins MinC and MinD at internal division sites while permitting inhibition at polar sites. This ensures cell division at the proper site by restricting the formation of a division septum at the midpoint of the long axis of the cell. This is Cell division topological specificity factor from Shewanella loihica (strain ATCC BAA-1088 / PV-4).